The chain runs to 277 residues: 3-methyl-2-oxobutanoate hydroxymethyltransferase (277 aa).

Positions 43 and 82 each coordinate Mg(2+). 3-methyl-2-oxobutanoate-binding positions include 43-44 (DS), aspartate 82, and lysine 112. A Mg(2+)-binding site is contributed by glutamate 114. Catalysis depends on glutamate 181, which acts as the Proton acceptor.

This sequence belongs to the PanB family. Homodecamer; pentamer of dimers. Mg(2+) is required as a cofactor.

The protein resides in the cytoplasm. It carries out the reaction 3-methyl-2-oxobutanoate + (6R)-5,10-methylene-5,6,7,8-tetrahydrofolate + H2O = 2-dehydropantoate + (6S)-5,6,7,8-tetrahydrofolate. It participates in cofactor biosynthesis; (R)-pantothenate biosynthesis; (R)-pantoate from 3-methyl-2-oxobutanoate: step 1/2. Functionally, catalyzes the reversible reaction in which hydroxymethyl group from 5,10-methylenetetrahydrofolate is transferred onto alpha-ketoisovalerate to form ketopantoate. This Bacillus velezensis (strain DSM 23117 / BGSC 10A6 / LMG 26770 / FZB42) (Bacillus amyloliquefaciens subsp. plantarum) protein is 3-methyl-2-oxobutanoate hydroxymethyltransferase.